Here is a 565-residue protein sequence, read N- to C-terminus: Proline--tRNA ligase (565 aa).

Belongs to the class-II aminoacyl-tRNA synthetase family. ProS type 1 subfamily. Homodimer.

It is found in the cytoplasm. It carries out the reaction tRNA(Pro) + L-proline + ATP = L-prolyl-tRNA(Pro) + AMP + diphosphate. In terms of biological role, catalyzes the attachment of proline to tRNA(Pro) in a two-step reaction: proline is first activated by ATP to form Pro-AMP and then transferred to the acceptor end of tRNA(Pro). As ProRS can inadvertently accommodate and process non-cognate amino acids such as alanine and cysteine, to avoid such errors it has two additional distinct editing activities against alanine. One activity is designated as 'pretransfer' editing and involves the tRNA(Pro)-independent hydrolysis of activated Ala-AMP. The other activity is designated 'posttransfer' editing and involves deacylation of mischarged Ala-tRNA(Pro). The misacylated Cys-tRNA(Pro) is not edited by ProRS. The sequence is that of Proline--tRNA ligase from Lactobacillus delbrueckii subsp. bulgaricus (strain ATCC BAA-365 / Lb-18).